Reading from the N-terminus, the 1781-residue chain is Signal-induced proliferation-associated 1-like protein 3 (1781 aa).

Disordered stretches follow at residues 45-166 (SMSQ…FLPL) and 239-332 (TELL…EASR). Residues 54 to 73 (PATATATATATTRPSPTTPA) show a composition bias toward low complexity. Residues 87-97 (PPKREALREHS) are compositionally biased toward basic and acidic residues. The residue at position 100 (Ser100) is a Phosphoserine. Residues 118–135 (RSIQNGQPPTSTPASSGS) show a composition bias toward polar residues. Basic residues predominate over residues 137-146 (AFHRLSRRRS). Ser146 is subject to Phosphoserine. Ser401 carries the phosphoserine modification. Residues 611–828 (LLKLDEQGLC…RTRQEYLKDL (218 aa)) form the Rap-GAP domain. Residues 966–1042 (DMTLRRNGLG…VKVVIIPPFE (77 aa)) form the PDZ domain. Disordered regions lie at residues 1046–1112 (PRRG…SLSR), 1124–1221 (ESQP…QKPE), 1236–1565 (AGSS…GLEP), and 1583–1636 (TLPA…RLDP). Polar residues-rich tracts occupy residues 1080 to 1111 (APWQ…QSLS) and 1157 to 1166 (PSGSFSTPGS). Over residues 1196 to 1210 (DGTSSGDSSSGGLTS) the composition is skewed to low complexity. Basic and acidic residues predominate over residues 1245 to 1261 (SRQDAAGKDSPNRHSKG). Residues 1266–1281 (SSHSSSNTLSSNASSS) are compositionally biased toward low complexity. Positions 1304 to 1322 (GGSSDSGIDTTLYTSSPSC) are enriched in polar residues. A Phosphoserine modification is found at Ser1364. The residue at position 1387 (Thr1387) is a Phosphothreonine. Over residues 1425–1441 (RPSQLAQPSPFQLSASV) the composition is skewed to polar residues. Residue Lys1448 is modified to N6-acetyllysine. Basic and acidic residues predominate over residues 1509–1518 (TIEDDLKKLI). Residues 1532-1547 (GQSPQKGLQRTLSDES) show a composition bias toward polar residues. 2 positions are modified to phosphoserine: Ser1544 and Ser1547. The span at 1599–1609 (PGATPAAGSGF) shows a compositional bias: low complexity. Phosphoserine occurs at positions 1619 and 1622. Residues 1625 to 1635 (DGRDRPLRRLD) show a composition bias toward basic and acidic residues. Position 1677 is a phosphoserine (Ser1677). The disordered stretch occupies residues 1685-1712 (SPVHSHLSLERGPPTPRTTPTMSEEPPL). Phosphothreonine is present on residues Thr1699 and Thr1703. Positions 1720 to 1774 (QLEVMLKQLHTDLQKEKQDKVVLQSEVASLRQNNQRLQEESQAASEQLRKFAEIF) form a coiled coil.

The protein resides in the apical cell membrane. Functionally, plays a critical role in epithelial cell morphogenesis, polarity, adhesion and cytoskeletal organization in the lens. The protein is Signal-induced proliferation-associated 1-like protein 3 (SIPA1L3) of Homo sapiens (Human).